Here is a 183-residue protein sequence, read N- to C-terminus: Ribosome-binding factor A (183 aa).

The segment at 132-183 (PAGEADPYRDNGSVAQSPAPGGLGIRTSDGPEAVEAPLTCGGDTGDDDRPKE) is disordered.

Belongs to the RbfA family. Monomer. Binds 30S ribosomal subunits, but not 50S ribosomal subunits or 70S ribosomes.

It is found in the cytoplasm. In terms of biological role, one of several proteins that assist in the late maturation steps of the functional core of the 30S ribosomal subunit. Associates with free 30S ribosomal subunits (but not with 30S subunits that are part of 70S ribosomes or polysomes). Required for efficient processing of 16S rRNA. May interact with the 5'-terminal helix region of 16S rRNA. This Mycobacterium tuberculosis (strain ATCC 25177 / H37Ra) protein is Ribosome-binding factor A.